Here is a 140-residue protein sequence, read N- to C-terminus: Organic hydroperoxide resistance protein-like (140 aa).

The protein belongs to the OsmC/Ohr family.

The sequence is that of Organic hydroperoxide resistance protein-like from Mycoplasma genitalium (strain ATCC 33530 / DSM 19775 / NCTC 10195 / G37) (Mycoplasmoides genitalium).